Here is a 291-residue protein sequence, read N- to C-terminus: Probable 2-(5''-triphosphoribosyl)-3'-dephosphocoenzyme-A synthase (291 aa).

It belongs to the CitG/MdcB family.

The catalysed reaction is 3'-dephospho-CoA + ATP = 2'-(5''-triphospho-alpha-D-ribosyl)-3'-dephospho-CoA + adenine. Its function is as follows. Involved in the formation of 2-(5''-phosphoribosyl)-3'-dephosphocoenzyme-A, the prosthetic group of the acyl-carrier protein of the malonate decarboxylase. The polypeptide is Probable 2-(5''-triphosphoribosyl)-3'-dephosphocoenzyme-A synthase (Pseudomonas savastanoi pv. phaseolicola (strain 1448A / Race 6) (Pseudomonas syringae pv. phaseolicola (strain 1448A / Race 6))).